A 572-amino-acid polypeptide reads, in one-letter code: 2-isopropylmalate synthase (572 aa).

One can recognise a Pyruvate carboxyltransferase domain in the interval 31–305; the sequence is PIWMSTDLRD…DPGLDFSNIN (275 aa). Mg(2+) is bound by residues Asp-40, His-244, His-246, and Asn-280. Residues 437-572 are regulatory domain; that stretch reads NTAPIHYVGH…MNDAAESVGV (136 aa).

It belongs to the alpha-IPM synthase/homocitrate synthase family. LeuA type 2 subfamily. In terms of assembly, homodimer. Requires Mg(2+) as cofactor.

The protein localises to the cytoplasm. The enzyme catalyses 3-methyl-2-oxobutanoate + acetyl-CoA + H2O = (2S)-2-isopropylmalate + CoA + H(+). It functions in the pathway amino-acid biosynthesis; L-leucine biosynthesis; L-leucine from 3-methyl-2-oxobutanoate: step 1/4. Functionally, catalyzes the condensation of the acetyl group of acetyl-CoA with 3-methyl-2-oxobutanoate (2-ketoisovalerate) to form 3-carboxy-3-hydroxy-4-methylpentanoate (2-isopropylmalate). The chain is 2-isopropylmalate synthase from Paraburkholderia phytofirmans (strain DSM 17436 / LMG 22146 / PsJN) (Burkholderia phytofirmans).